We begin with the raw amino-acid sequence, 470 residues long: Homogentisate 1,2-dioxygenase (470 aa).

Fe cation-binding residues include H356, E362, and H392.

It belongs to the homogentisate dioxygenase family. Requires Fe cation as cofactor.

The enzyme catalyses homogentisate + O2 = 4-maleylacetoacetate + H(+). Its pathway is amino-acid degradation; L-phenylalanine degradation; acetoacetate and fumarate from L-phenylalanine: step 4/6. This Oryza sativa subsp. japonica (Rice) protein is Homogentisate 1,2-dioxygenase (HGO).